The sequence spans 136 residues: HetP-like commitment protein Alr2902 (136 aa).

Polar residues predominate over residues 94 to 109; it reads KASTQDLNQSNNSDYL. Residues 94–120 form a disordered region; that stretch reads KASTQDLNQSNNSDYLTTPEPDKRGNI.

The protein belongs to the HetP family. In bacterial two-hybrid assays interacts robustly with HetR and Alr3234 and weakly with itself, HetP and Asl1930.

Functionally, delays heterocyst differentiation and commitment when nitrogen is limiting. Interplay between the 4 HetP paralogs controls the timing of commitment to heterocyst formation and its duration. Epistatic analysis show that the 3 paralogs act upstream of hetP to delay commitment (asl1930, alr3234) or inhibit development (alr2902). Asl1930 and Alr3234 must also attenuate the activity of Alr2902. When only this homolog is present no heterocysts are formed, showing it inhibits development. Ectopic expression partially complements a hetP deletion. In Nostoc sp. (strain PCC 7120 / SAG 25.82 / UTEX 2576), this protein is HetP-like commitment protein Alr2902.